The primary structure comprises 539 residues: F-box/WD-40 repeat-containing protein At5g21040 (539 aa).

Positions 65–111 (STTIIDLPQALISEILNCLDPKELGLVSCVSTYLHRLASEHHAWKEF) constitute an F-box domain. WD repeat units follow at residues 160–199 (GHTE…SIAA), 201–239 (KPLG…RNLF), 255–292 (GHEG…CVKT), 294–330 (RHSD…PLAI), 334–373 (AHEG…SETS), 382–419 (PHTS…KTNR), and 433–477 (PPQR…EIER). Residues 505 to 539 (GRPDQCSIAAHKNPINGERNRAWHSKRRASGKAKA) form a disordered region. The span at 526–539 (AWHSKRRASGKAKA) shows a compositional bias: basic residues.

The protein is F-box/WD-40 repeat-containing protein At5g21040 of Arabidopsis thaliana (Mouse-ear cress).